Here is a 609-residue protein sequence, read N- to C-terminus: MGESERSEAFGIPRDSPLSSGDAAELEQLRREAAVLREQLENAVGSHAPTRSARDIHQLEARIDSLAARNSKLMETLKEARQQLLALREEVDRLGQPPSGYGVLLATHDDDTVDVFTSGRKMRLTCSPNIDAASLKKGQTVRLNEALTVVEAGTFEAVGEISTLREILADGHRALVVGHADEERVVWLADPLIAEDLPDGLPEALNDDTRPRKLRPGDSLLVDTKAGYAFERIPKAEVEDLVLEEVPDVSYADIGGLSRQIEQIRDAVELPFLHKELYREYSLRPPKGVLLYGPPGCGKTLIAKAVANSLAKKMAEVRGDDAHEAKSYFLNIKGPELLNKFVGETERHIRLIFQRAREKASEGTPVIVFFDEMDSIFRTRGTGVSSDVETTVVPQLLSEIDGVEGLENVIVIGASNREDMIDPAILRPGRLDVKIKIERPDAEAAQDIYSKYLTEFLPVHADDLAEFDGDRSACIKAMIEKVVDRMYAEIDDNRFLEVTYANGDKEVMYFKDFNSGAMIQNVVDRAKKNAIKSVLETGQPGLRIQHLLDSIVDEFAENEDLPNTTNPDDWARISGKKGERIVYIRTLVTGKSSSASRAIDTESNLGQYL.

The segment at 1 to 24 (MGESERSEAFGIPRDSPLSSGDAA) is disordered. Positions 20-96 (SGDAAELEQL…LREEVDRLGQ (77 aa)) form a coiled coil. ATP is bound at residue 296–301 (GCGKTL). A docks into pockets in the proteasome alpha-ring region spans residues 608-609 (YL).

Belongs to the AAA ATPase family. In terms of assembly, homohexamer. Assembles into a hexameric ring structure that caps the 20S proteasome core. Strongly interacts with the prokaryotic ubiquitin-like protein Pup through a hydrophobic interface; the interacting region of ARC lies in its N-terminal coiled-coil domain. There is one Pup binding site per ARC hexamer ring. Upon ATP-binding, the C-terminus of ARC interacts with the alpha-rings of the proteasome core, possibly by binding to the intersubunit pockets.

It participates in protein degradation; proteasomal Pup-dependent pathway. ATPase which is responsible for recognizing, binding, unfolding and translocation of pupylated proteins into the bacterial 20S proteasome core particle. May be essential for opening the gate of the 20S proteasome via an interaction with its C-terminus, thereby allowing substrate entry and access to the site of proteolysis. Thus, the C-termini of the proteasomal ATPase may function like a 'key in a lock' to induce gate opening and therefore regulate proteolysis. The polypeptide is Proteasome-associated ATPase (Mycobacterium bovis (strain BCG / Pasteur 1173P2)).